The following is a 23-amino-acid chain: Cytochrome c oxidase subunit 7A-liver, mitochondrial (23 aa).

The protein belongs to the cytochrome c oxidase VIIa family. Component of the cytochrome c oxidase (complex IV, CIV), a multisubunit enzyme composed of 14 subunits. The complex is composed of a catalytic core of 3 subunits MT-CO1, MT-CO2 and MT-CO3, encoded in the mitochondrial DNA, and 11 supernumerary subunits COX4I, COX5A, COX5B, COX6A, COX6B, COX6C, COX7A, COX7B, COX7C, COX8 and NDUFA4, which are encoded in the nuclear genome. The complex exists as a monomer or a dimer and forms supercomplexes (SCs) in the inner mitochondrial membrane with NADH-ubiquinone oxidoreductase (complex I, CI) and ubiquinol-cytochrome c oxidoreductase (cytochrome b-c1 complex, complex III, CIII), resulting in different assemblies (supercomplex SCI(1)III(2)IV(1) and megacomplex MCI(2)III(2)IV(2)).

It is found in the mitochondrion inner membrane. It participates in energy metabolism; oxidative phosphorylation. In terms of biological role, component of the cytochrome c oxidase, the last enzyme in the mitochondrial electron transport chain which drives oxidative phosphorylation. The respiratory chain contains 3 multisubunit complexes succinate dehydrogenase (complex II, CII), ubiquinol-cytochrome c oxidoreductase (cytochrome b-c1 complex, complex III, CIII) and cytochrome c oxidase (complex IV, CIV), that cooperate to transfer electrons derived from NADH and succinate to molecular oxygen, creating an electrochemical gradient over the inner membrane that drives transmembrane transport and the ATP synthase. Cytochrome c oxidase is the component of the respiratory chain that catalyzes the reduction of oxygen to water. Electrons originating from reduced cytochrome c in the intermembrane space (IMS) are transferred via the dinuclear copper A center (CU(A)) of subunit 2 and heme A of subunit 1 to the active site in subunit 1, a binuclear center (BNC) formed by heme A3 and copper B (CU(B)). The BNC reduces molecular oxygen to 2 water molecules using 4 electrons from cytochrome c in the IMS and 4 protons from the mitochondrial matrix. The polypeptide is Cytochrome c oxidase subunit 7A-liver, mitochondrial (Oncorhynchus mykiss (Rainbow trout)).